A 430-amino-acid polypeptide reads, in one-letter code: Asparagine--tRNA ligase (430 aa).

Belongs to the class-II aminoacyl-tRNA synthetase family. In terms of assembly, homodimer.

Its subcellular location is the cytoplasm. It catalyses the reaction tRNA(Asn) + L-asparagine + ATP = L-asparaginyl-tRNA(Asn) + AMP + diphosphate + H(+). The polypeptide is Asparagine--tRNA ligase (Shouchella clausii (strain KSM-K16) (Alkalihalobacillus clausii)).